Reading from the N-terminus, the 227-residue chain is DNA utilization protein YhgH (227 aa).

Belongs to the ComF/GntX family.

Required for the use of extracellular DNA as a nutrient. Has been suggested to be involved in gluconate metabolism. In Escherichia coli (strain K12), this protein is DNA utilization protein YhgH.